Here is a 391-residue protein sequence, read N- to C-terminus: tRNA (cytosine(38)-C(5))-methyltransferase (391 aa).

One can recognise an SAM-dependent MTase C5-type domain in the interval 4-391 (LRALELYSGI…VAKLIKILCD (388 aa)). Residues 13-15 (IGG), D34, 57-58 (IE), and S76 each bind S-adenosyl-L-methionine. The active site involves C79. S376 provides a ligand contact to S-adenosyl-L-methionine.

The protein belongs to the class I-like SAM-binding methyltransferase superfamily. C5-methyltransferase family.

The protein localises to the cytoplasm. The catalysed reaction is cytidine(38) in tRNA + S-adenosyl-L-methionine = 5-methylcytidine(38) in tRNA + S-adenosyl-L-homocysteine + H(+). Functionally, specifically methylates cytosine 38 in the anticodon loop of tRNA(Asp). Has higher activity on tRNA(Asp) modified with queuosine at position 34. In Bos taurus (Bovine), this protein is tRNA (cytosine(38)-C(5))-methyltransferase (TRDMT1).